Here is a 1503-residue protein sequence, read N- to C-terminus: ATP-binding cassette sub-family C member 6 (1503 aa).

Over 1-31 the chain is Extracellular; it reads MAAPAEPCAGQGVWNQTEPEPAATSLLSLCF. An N-linked (GlcNAc...) asparagine glycan is attached at N15. A helical membrane pass occupies residues 32 to 52; sequence LRTAGVWVPPMYLWVLGPIYL. The Cytoplasmic segment spans residues 53–72; it reads LFIHHHGRGYLRMSPLFKAK. The chain crosses the membrane as a helical span at residues 73–93; that stretch reads MVLGFALIVLCTSSVAVALWK. Residues 94–98 are Extracellular-facing; that stretch reads IQQGT. The helical transmembrane segment at 99 to 119 threads the bilayer; that stretch reads PEAPEFLIHPTVWLTTMSFAV. The Cytoplasmic portion of the chain corresponds to 120–131; that stretch reads FLIHTERKKGVQ. The chain crosses the membrane as a helical span at residues 132–149; it reads SSGVLFGYWLLCFVLPAT. The Extracellular portion of the chain corresponds to 150 to 167; sequence NAAQQASGAGFQSDPVRH. The chain crosses the membrane as a helical span at residues 168–188; it reads LSTYLCLSLVVAQFVLSCLAD. Topologically, residues 189-302 are cytoplasmic; it reads QPPFFPEDPQ…GSQWRPLLKA (114 aa). A helical transmembrane segment spans residues 303-323; that stretch reads IWQVFHSTFLLGTLSLIISDV. Residues 311–593 enclose the ABC transmembrane type-1 1 domain; the sequence is FLLGTLSLII…LPFSIHSLVQ (283 aa). The Extracellular portion of the chain corresponds to 324–349; sequence FRFTVPKLLSLFLEFIGDPKPPAWKG. The chain crosses the membrane as a helical span at residues 350-370; sequence YLLAVLMFLSACLQTLFEQQN. The Cytoplasmic portion of the chain corresponds to 371 to 426; that stretch reads MYRLKVLQMRLRSAITGLVYRKVLALSSGSRKASAVGDVVNLVSVDVQRLTESVLY. The helical transmembrane segment at 427-447 threads the bilayer; sequence LNGLWLPLVWIVVCFVYLWQL. Residues 448–450 lie on the Extracellular side of the membrane; the sequence is LGP. A helical membrane pass occupies residues 451-471; that stretch reads SALTAIAVFLSLLPLNFFISK. Residues 472 to 533 are Cytoplasmic-facing; sequence KRNHHQEEQM…ALRTSGLLFS (62 aa). Residues 534–554 traverse the membrane as a helical segment; the sequence is VSLVSFQVSTFLVALVVFAVH. Topologically, residues 555 to 575 are extracellular; that stretch reads TLVAENAMNAEKAFVTLTVLN. Residues 576 to 596 form a helical membrane-spanning segment; it reads ILNKAQAFLPFSIHSLVQARV. The Cytoplasmic portion of the chain corresponds to 597-939; sequence SFDRLVTFLC…VKATVHLAYL (343 aa). Residues 629–853 form the ABC transporter 1 domain; sequence ITIHSATFAW…KGALMCLLDQ (225 aa). 663 to 670 contributes to the ATP binding site; the sequence is GPVGAGKS. The tract at residues 854 to 919 is disordered; the sequence is ARQPGDRGEG…LDDPDRAGWP (66 aa). Residues 881–901 show a composition bias toward basic and acidic residues; the sequence is RRPELRRERSIKSVPEKDRTT. A helical transmembrane segment spans residues 940-960; that stretch reads RAVGTPLCLYALFLFLCQQVA. Positions 947–1228 constitute an ABC transmembrane type-1 2 domain; it reads CLYALFLFLC…VVRNWTDLEN (282 aa). The Extracellular portion of the chain corresponds to 961 to 997; sequence SFCRGYWLSLWADDPAVGGQQTQAALRGGIFGLLGCL. A helical transmembrane segment spans residues 998–1018; it reads QAIGLFASMAAVLLGGARASR. The Cytoplasmic segment spans residues 1019 to 1061; sequence LLFQRLLWDVVRSPISFFERTPIGHLLNRFSKETDTVDVDIPD. A helical membrane pass occupies residues 1062 to 1082; the sequence is KLRSLLMYAFGLLEVSLVVAV. Position 1083 (A1083) is a topological domain, extracellular. Residues 1084–1104 form a helical membrane-spanning segment; the sequence is TPLATVAILPLFLLYAGFQSL. The Cytoplasmic portion of the chain corresponds to 1105–1175; that stretch reads YVVSSCQLRR…VADRWLAANV (71 aa). Residues 1176 to 1196 traverse the membrane as a helical segment; that stretch reads ELLGNGLVFAAATCAVLSKAH. The Extracellular portion of the chain corresponds to 1197 to 1198; the sequence is LS. The helical transmembrane segment at 1199 to 1219 threads the bilayer; that stretch reads AGLVGFSVSAALQVTQTLQWV. Over 1220–1503 the chain is Cytoplasmic; the sequence is VRNWTDLENS…YRLAQESGLV (284 aa). The region spanning 1265–1499 is the ABC transporter 2 domain; it reads IEFRDFGLRY…KGLFYRLAQE (235 aa). S1286 is modified (phosphoserine). Residue 1299–1306 participates in ATP binding; that stretch reads GRTGAGKS.

It belongs to the ABC transporter superfamily. ABCC family. Conjugate transporter (TC 3.A.1.208) subfamily. Mg(2+) serves as cofactor. In terms of processing, glycosylated. In terms of tissue distribution, expressed in kidney and liver. Very low expression in other tissues. In testis, localized to peritubular myoid cells, Leydig cells, along the basal membrane of Sertoli cells and moderately in the adluminal compartment of the seminiferous tubules.

The protein localises to the basal cell membrane. It is found in the basolateral cell membrane. The protein resides in the endoplasmic reticulum membrane. The enzyme catalyses an S-substituted glutathione(in) + ATP + H2O = an S-substituted glutathione(out) + ADP + phosphate + H(+). It carries out the reaction leukotriene C4(in) + ATP + H2O = leukotriene C4(out) + ADP + phosphate + H(+). LTC4 transport is completely inhibited by 1 mM orthovanadate. Functionally, ATP-dependent transporter of the ATP-binding cassette (ABC) family that actively extrudes physiological compounds, and xenobiotics from cells. Mediates ATP-dependent transport of glutathione conjugates such as leukotriene-c4 (LTC4) and N-ethylmaleimide S-glutathione (NEM-GS) (in vitro), and an anionic cyclopentapeptide endothelin antagonist, BQ-123. May contribute to regulate the transport of organic compounds in testes across the blood-testis-barrier. Does not appear to actively transport drugs outside the cell. Confers low levels of cellular resistance to etoposide, teniposide, anthracyclines and cisplatin. In terms of biological role, mediates the release of nucleoside triphosphates, predominantly ATP, into the circulation, where it is rapidly converted into AMP and the mineralization inhibitor inorganic pyrophosphate (PPi) by the ecto-enzyme ectonucleotide pyrophosphatase phosphodiesterase 1 (ENPP1), therefore playing a role in PPi homeostasis. Inhibits TNF-alpha-mediated apoptosis through blocking one or more caspases. This is ATP-binding cassette sub-family C member 6 (ABCC6) from Homo sapiens (Human).